A 251-amino-acid chain; its full sequence is Putative glutathione-independent glyoxalase hsp3105 (251 aa).

Belongs to the peptidase C56 family. HSP31-like subfamily.

It localises to the cytoplasm. It is found in the nucleus. The enzyme catalyses methylglyoxal + H2O = (R)-lactate + H(+). Its function is as follows. May catalyze the conversion of methylglyoxal (MG) to D-lactate in a single glutathione (GSH)-independent step. May play a role in detoxifying endogenously produced glyoxals. Involved in protection against reactive oxygen species (ROS). The protein is Putative glutathione-independent glyoxalase hsp3105 of Schizosaccharomyces pombe (strain 972 / ATCC 24843) (Fission yeast).